Consider the following 427-residue polypeptide: Glutamate-1-semialdehyde 2,1-aminomutase (427 aa).

Lysine 265 carries the N6-(pyridoxal phosphate)lysine modification.

The protein belongs to the class-III pyridoxal-phosphate-dependent aminotransferase family. HemL subfamily. In terms of assembly, homodimer. Pyridoxal 5'-phosphate is required as a cofactor.

The protein resides in the cytoplasm. The enzyme catalyses (S)-4-amino-5-oxopentanoate = 5-aminolevulinate. It functions in the pathway porphyrin-containing compound metabolism; protoporphyrin-IX biosynthesis; 5-aminolevulinate from L-glutamyl-tRNA(Glu): step 2/2. The protein is Glutamate-1-semialdehyde 2,1-aminomutase of Pseudomonas fluorescens (strain SBW25).